Consider the following 523-residue polypeptide: ATP-dependent RNA helicase DBP3 (523 aa).

The span at 1–21 shows a compositional bias: basic and acidic residues; sequence MTKEEIADKKRKVVDEEVIEK. The interval 1 to 71 is disordered; it reads MTKEEIADKK…SEKKPEPTSA (71 aa). Basic residues predominate over residues 22 to 48; sequence KKSKKHKKDKKDKKEKKDKKHKKHKKE. The segment covering 49–67 has biased composition (basic and acidic residues); it reads KKGEKEVEVPEKESEKKPE. The Q motif signature appears at 114–140; sequence LSFDYLSLDSSIQAEISKFPKPTPIQA. The 173-residue stretch at 143 to 315 folds into the Helicase ATP-binding domain; it reads WPYLLSGKDV…STFMNNPIKV (173 aa). 156-163 contacts ATP; the sequence is AETGSGKT. The DEAD box signature appears at 262–265; it reads DEAD. The Helicase C-terminal domain maps to 344 to 493; sequence KLLELLKKYH…PVPEDLIKFG (150 aa).

It belongs to the DEAD box helicase family. DDX5/DBP2 subfamily.

Its subcellular location is the nucleus. The protein resides in the nucleolus. It catalyses the reaction ATP + H2O = ADP + phosphate + H(+). Its function is as follows. ATP-dependent RNA helicase required for 60S ribosomal subunit synthesis. Involved in efficient pre-rRNA processing, predominantly at site A3, which is necessary for the normal formation of 25S and 5.8S rRNAs. This Saccharomyces cerevisiae (strain ATCC 204508 / S288c) (Baker's yeast) protein is ATP-dependent RNA helicase DBP3 (DBP3).